Here is a 129-residue protein sequence, read N- to C-terminus: Keratin-associated protein 5-6 (129 aa).

Repeat copies occupy residues 28-31 (CCVP), 34-37 (CCKP), 40-43 (CCVP), 90-93 (CCKP), 109-112 (CCKP), and 119-122 (CCVP). The segment at 28 to 112 (CCVPICCCKP…SCCQSSCCKP (85 aa)) is 6 X 4 AA repeats of C-C-X-P.

The protein belongs to the KRTAP type 5 family. As to quaternary structure, interacts with hair keratins. In terms of tissue distribution, expressed in hair root and not in skin. Expressed also in liver and skeletal muscle.

Functionally, in the hair cortex, hair keratin intermediate filaments are embedded in an interfilamentous matrix, consisting of hair keratin-associated protein (KRTAP), which are essential for the formation of a rigid and resistant hair shaft through their extensive disulfide bond cross-linking with abundant cysteine residues of hair keratins. The matrix proteins include the high-sulfur and high-glycine-tyrosine keratins. In Homo sapiens (Human), this protein is Keratin-associated protein 5-6 (KRTAP5-6).